A 114-amino-acid chain; its full sequence is TYRO protein tyrosine kinase-binding protein (114 aa).

Residues 1–21 form the signal peptide; sequence MGALEPSWCLLFLPVLLTVGG. The Extracellular segment spans residues 22–42; that stretch reads LSPVQAQSDTFPRCDCSSVSP. Residues 43–63 form a helical membrane-spanning segment; that stretch reads GVLAGIVLGDLVLTLLIALAV. Residue Asp-52 coordinates Ca(2+). At 64-114 the chain is on the cytoplasmic side; the sequence is YSLGRLVSRGQGTAEGTRKQHIAETESPYQELQGQRPEVYSDLNTQRQYYR. The segment at 74 to 107 is disordered; the sequence is QGTAEGTRKQHIAETESPYQELQGQRPEVYSDLN. Positions 81–109 constitute an ITAM domain; that stretch reads RKQHIAETESPYQELQGQRPEVYSDLNTQ. Tyr-92 and Tyr-103 each carry phosphotyrosine.

The protein belongs to the TYROBP family. In terms of assembly, homodimer; disulfide-linked. Homotrimer; disulfide-linked. Homotetramer; disulfide-linked. Homotrimers and homotetramers form when low levels of partner receptors are available and are competitive with assembly with interacting receptors. They may represent alternative oligomerization states or may be intermediates in the receptor assembly process. Binding of a metal cation aids in homooligomerization through coordination of the metal ion by the subunits of the oligomer. Interacts with TREM1. Interacts with TREM2. Interacts with TREM3. Interacts with CLECSF5. Interacts with CD300LB and CD300C2. Interacts with CD300E. Interacts (via ITAM domain) with SYK (via SH2 domains); activates SYK mediating neutrophil and macrophage integrin-mediated activation. Interacts (via transmembrane domain) with KLRK1 isoform 2 (via transmembrane domain); the interaction is required for KLRK1 NK cell surface expression and NK cell-mediated cytotoxicity. Interacts with KLRC2. Interacts with CD300H. Interacts with KLRD1. Interacts with KLRA4 and KLRA8. In terms of processing, tyrosine phosphorylated. Following ligand binding by associated receptors, tyrosine phosphorylated in the ITAM domain which leads to activation of additional tyrosine kinases and subsequent cell activation. In terms of tissue distribution, expressed on microglia (at protein level). Expressed on oligodendrocytes (at protein level). Expressed on macrophages and osteoclasts. Expressed on dendritic cells in liver, spleen, kidney and lung with highest levels in liver dendritic cells.

The protein resides in the cell membrane. Functionally, adapter protein which non-covalently associates with activating receptors found on the surface of a variety of immune cells to mediate signaling and cell activation following ligand binding by the receptors. TYROBP is tyrosine-phosphorylated in the ITAM domain following ligand binding by the associated receptors which leads to activation of additional tyrosine kinases and subsequent cell activation. Also has an inhibitory role in some cells. Non-covalently associates with activating receptors of the CD300 family to mediate cell activation. Also mediates cell activation through association with activating receptors of the CD200R family. Required for neutrophil activation mediated by integrin. Required for the activation of myeloid cells mediated by the CLEC5A/MDL1 receptor. Associates with natural killer (NK) cell receptors such as the KLRD1/KLRC2 heterodimer to mediate NK cell activation. Also associates non-covalently with the NK cell receptors KLRA4/LY49D and KLRA8/LY49H which leads to NK cell activation. Associates with TREM1 to mediate activation of neutrophils and monocytes. Associates with TREM2 on monocyte-derived dendritic cells to mediate up-regulation of chemokine receptor CCR7 and dendritic cell maturation and survival. Association with TREM2 mediates cytokine-induced formation of multinucleated giant cells which are formed by the fusion of macrophages. Stabilizes the TREM2 C-terminal fragment (TREM2-CTF) which is produced by TREM2 ectodomain shedding. In microglia, required with TREM2 for phagocytosis of apoptotic neurons. Required with ITGAM/CD11B in microglia to control production of microglial superoxide ions which promote the neuronal apoptosis that occurs during brain development. Promotes pro-inflammatory responses in microglia following nerve injury which accelerates degeneration of injured neurons. Positively regulates the expression of the IRAK3/IRAK-M kinase and IL10 production by liver dendritic cells and inhibits their T cell allostimulatory ability. Negatively regulates B cell proliferation. Required for CSF1-mediated osteoclast cytoskeletal organization. Positively regulates multinucleation during osteoclast development. The polypeptide is TYRO protein tyrosine kinase-binding protein (Mus musculus (Mouse)).